Consider the following 278-residue polypeptide: Phosphatidylglycerol--prolipoprotein diacylglyceryl transferase (278 aa).

4 consecutive transmembrane segments (helical) span residues 19-39, 49-69, 86-106, and 112-132; these read WYGI…INEG, FIDF…IYYV, IWNG…VLLI, and MLPP…AQVI. Arg-134 is a binding site for a 1,2-diacyl-sn-glycero-3-phospho-(1'-sn-glycerol). A run of 3 helical transmembrane segments spans residues 174 to 194, 204 to 224, and 235 to 255; these read QPTY…ILSL, GEIF…VEGM, and IRVS…LWIY.

It belongs to the Lgt family.

The protein resides in the cell membrane. The catalysed reaction is L-cysteinyl-[prolipoprotein] + a 1,2-diacyl-sn-glycero-3-phospho-(1'-sn-glycerol) = an S-1,2-diacyl-sn-glyceryl-L-cysteinyl-[prolipoprotein] + sn-glycerol 1-phosphate + H(+). Its pathway is protein modification; lipoprotein biosynthesis (diacylglyceryl transfer). Functionally, catalyzes the transfer of the diacylglyceryl group from phosphatidylglycerol to the sulfhydryl group of the N-terminal cysteine of a prolipoprotein, the first step in the formation of mature lipoproteins. The chain is Phosphatidylglycerol--prolipoprotein diacylglyceryl transferase from Lactobacillus johnsonii (strain CNCM I-12250 / La1 / NCC 533).